A 604-amino-acid chain; its full sequence is Polycomb group protein EMF2B (604 aa).

A C2H2-type zinc finger spans residues 310–331 (CPFCLVPCGSFKGLGCHLNASH). A disordered region spans residues 396 to 440 (PHIVDSGSPEDAQAGSEDDYVQRENGSSVAHASVDPANSLHGSNL). The VEFS-box stretch occupies residues 454–589 (LSVERADPRN…DARAMNACNT (136 aa)).

It belongs to the VEFS (VRN2-EMF2-FIS2-SU(Z)12) family. As to quaternary structure, component of the polycomb repressive complex 2 (PRC2), composed of the core PRC2 components FIE2, EZ1 and CLF. PRC2 methylates 'Lys-27' residues of histone H3 (H3K27me3), leading to transcriptional repression of the affected target gene. Widely expressed.

In terms of biological role, polycomb group (PcG) protein. PcG proteins act by forming multiprotein complexes, which are required to maintain the transcriptionally repressive state of homeotic genes throughout development. PcG proteins are not required to initiate repression, but to maintain it during later stages of development. They act via the methylation of histones, rendering chromatin heritably changed in its expressibility. Polycomb group (PcG) protein involved in the repression of flowering under long day (LD) conditions. Regulates floret development. This chain is Polycomb group protein EMF2B, found in Oryza sativa subsp. japonica (Rice).